The sequence spans 750 residues: MIIDRLLQRSHSHLPILQATFGLERESLRIHQPTQRVAQTPHPKTLGSRNYHPYIQTDYSEPQLELITPIAKDSQEAIRFLKAISDVAGRSINHDEYLWPLSMPPKVREEDIQIAQLEDAFEYDYRKYLEKTYGKLIQSISGIHYNLGLGQELLTSLFELSQADNAIDFQNQLYMKLSQNFLRYRWLLTYLYGASPVAEEDFLDQKLNNPVRSLRNSHLGYVNHKDIRISYTSLKDYVNDLENAVKSGQLIAEKEFYSPVRLRGSKACRNYLEKGITYLEFRTFDLNPFSPIGITQETVDTVHLFLLALLWIDSSSHIDQDIKEANRLNDLIALSHPLEKLPNQAPVSDLVDAMQSVIQHFNLSPYYQDLLESVKRQIQSPELTVAGQLLEMIEGLSLETFGQRQGQIYHDYAWEAPYALKGYETMELSTQLLLFDVIQKGVNFEVLDEQDQFLKLWHNSHIEYVKNGNMTSKDNYIVPLAMANKVVTKKILDEKHFPTPFGDEFTDRKEALNYFSQIQDKPIVVKPKSTNFGLGISIFKTSANLASYEKAIDIAFTEDSAILVEEYIEGTEYRFFVLEGDCIAVLLRVAANVVGDGIHTISQLVKLKNQNPLRGYDHRSPLEVIELGEVEQLMLEQQGYTVNSIPPEGTKIELRRNSNISTGGDSIDVTNTMDPTYKQLAAEMAEAMGAWVCGVDLIIPNATQAYSKDKKNATCIELNFNPLMYMHTYCQEGPGQSITPRILAKLFPEL.

The interval 1 to 333 is glutamate--cysteine ligase; sequence MIIDRLLQRS…EANRLNDLIA (333 aa). The interval 32-51 is disordered; the sequence is QPTQRVAQTPHPKTLGSRNY. Residues 489 to 747 enclose the ATP-grasp domain; sequence KKILDEKHFP…ITPRILAKLF (259 aa). 516-574 is an ATP binding site; sequence SQIQDKPIVVKPKSTNFGLGISIFKTSANLASYEKAIDIAFTEDSAILVEEYIEGTEYR. Mg(2+) is bound by residues D696, E717, and N719. Mn(2+) contacts are provided by D696, E717, and N719.

In the N-terminal section; belongs to the glutamate--cysteine ligase type 1 family. Type 2 subfamily. As to quaternary structure, monomer. Mg(2+) is required as a cofactor. The cofactor is Mn(2+).

It carries out the reaction L-cysteine + L-glutamate + ATP = gamma-L-glutamyl-L-cysteine + ADP + phosphate + H(+). The catalysed reaction is gamma-L-glutamyl-L-cysteine + glycine + ATP = glutathione + ADP + phosphate + H(+). Its pathway is sulfur metabolism; glutathione biosynthesis; glutathione from L-cysteine and L-glutamate: step 1/2. It functions in the pathway sulfur metabolism; glutathione biosynthesis; glutathione from L-cysteine and L-glutamate: step 2/2. Its function is as follows. Synthesizes glutathione from L-glutamate and L-cysteine via gamma-L-glutamyl-L-cysteine. The protein is Glutathione biosynthesis bifunctional protein GshAB of Streptococcus agalactiae serotype III (strain NEM316).